The primary structure comprises 218 residues: N-(5'-phosphoribosyl)anthranilate isomerase (218 aa).

It belongs to the TrpF family.

It catalyses the reaction N-(5-phospho-beta-D-ribosyl)anthranilate = 1-(2-carboxyphenylamino)-1-deoxy-D-ribulose 5-phosphate. It functions in the pathway amino-acid biosynthesis; L-tryptophan biosynthesis; L-tryptophan from chorismate: step 3/5. This is N-(5'-phosphoribosyl)anthranilate isomerase from Lachnoclostridium phytofermentans (strain ATCC 700394 / DSM 18823 / ISDg) (Clostridium phytofermentans).